Here is a 495-residue protein sequence, read N- to C-terminus: Omega-crystallin (495 aa).

Belongs to the aldehyde dehydrogenase family. Lens.

Functionally, omega-crystallins are structural components of squids and octopi eye lens. Contains relatively little if any DHAL activity. The protein is Omega-crystallin of Nototodarus sloanii (Wellington flying squid).